We begin with the raw amino-acid sequence, 148 residues long: C-C motif chemokine 2 (148 aa).

The N-terminal stretch at 1–23 (MQVPVMLLGLLFTVAGWSIHVLA) is a signal peptide. Gln-24 carries the pyrrolidone carboxylic acid modification. 2 cysteine pairs are disulfide-bonded: Cys-34–Cys-59 and Cys-35–Cys-75. The N-linked (GlcNAc...) asparagine glycan is linked to Asn-126.

Belongs to the intercrine beta (chemokine CC) family. As to quaternary structure, monomer or homodimer; in equilibrium. Is tethered on endothelial cells by glycosaminoglycan (GAG) side chains of proteoglycans. Interacts with TNFAIP6 (via Link domain). Processing at the N-terminus can regulate receptor and target cell selectivity. Deletion of the N-terminal residue converts it from an activator of basophil to an eosinophil chemoattractant. Post-translationally, N-Glycosylated.

It localises to the secreted. In terms of biological role, acts as a ligand for C-C chemokine receptor CCR2. Signals through binding and activation of CCR2 and induces a strong chemotactic response and mobilization of intracellular calcium ions. Exhibits a chemotactic activity for monocytes and basophils but not neutrophils or eosinophils. Plays an important role in mediating peripheral nerve injury-induced neuropathic pain. Increases NMDA-mediated synaptic transmission in both dopamine D1 and D2 receptor-containing neurons, which may be caused by MAPK/ERK-dependent phosphorylation of GRIN2B/NMDAR2B. The sequence is that of C-C motif chemokine 2 (Ccl2) from Mus musculus (Mouse).